Reading from the N-terminus, the 172-residue chain is Ferritin-2 heavy chain (172 aa).

One can recognise a Ferritin-like diiron domain in the interval 8–157; that stretch reads QSFATECENA…DYLTETQRVG (150 aa). Residues Glu-25, Glu-60, His-63, Glu-105, and Gln-139 each coordinate Fe cation.

The protein belongs to the ferritin family. Oligomer of 24 subunits. The functional molecule forms a roughly spherical shell with a diameter of 12 nm and contains a central cavity into which the insoluble mineral iron core is deposited.

It carries out the reaction 4 Fe(2+) + O2 + 4 H(+) = 4 Fe(3+) + 2 H2O. In terms of biological role, stores iron in a soluble, non-toxic, readily available form. Important for iron homeostasis. Has ferroxidase activity. Iron is taken up in the ferrous form and deposited as ferric hydroxides after oxidation. The protein is Ferritin-2 heavy chain (SCM-2) of Schistosoma mansoni (Blood fluke).